The primary structure comprises 208 residues: Uracil phosphoribosyltransferase (208 aa).

5-phospho-alpha-D-ribose 1-diphosphate-binding positions include Arg77, Arg102, and Asp129–Ser137. Residues Ile193 and Gly198–Ala200 contribute to the uracil site. 5-phospho-alpha-D-ribose 1-diphosphate is bound at residue Asp199.

The protein belongs to the UPRTase family. Requires Mg(2+) as cofactor.

It carries out the reaction UMP + diphosphate = 5-phospho-alpha-D-ribose 1-diphosphate + uracil. It functions in the pathway pyrimidine metabolism; UMP biosynthesis via salvage pathway; UMP from uracil: step 1/1. Its activity is regulated as follows. Allosterically activated by GTP. Catalyzes the conversion of uracil and 5-phospho-alpha-D-ribose 1-diphosphate (PRPP) to UMP and diphosphate. The protein is Uracil phosphoribosyltransferase of Mycoplasmopsis pulmonis (strain UAB CTIP) (Mycoplasma pulmonis).